A 200-amino-acid chain; its full sequence is Imidazole glycerol phosphate synthase subunit HisH (200 aa).

Positions 3-200 (DVALIDAGGA…LHNFLEMSFP (198 aa)) constitute a Glutamine amidotransferase type-1 domain. Catalysis depends on Cys78, which acts as the Nucleophile. Active-site residues include His179 and Glu181.

In terms of assembly, heterodimer of HisH and HisF.

The protein localises to the cytoplasm. The catalysed reaction is 5-[(5-phospho-1-deoxy-D-ribulos-1-ylimino)methylamino]-1-(5-phospho-beta-D-ribosyl)imidazole-4-carboxamide + L-glutamine = D-erythro-1-(imidazol-4-yl)glycerol 3-phosphate + 5-amino-1-(5-phospho-beta-D-ribosyl)imidazole-4-carboxamide + L-glutamate + H(+). It carries out the reaction L-glutamine + H2O = L-glutamate + NH4(+). It functions in the pathway amino-acid biosynthesis; L-histidine biosynthesis; L-histidine from 5-phospho-alpha-D-ribose 1-diphosphate: step 5/9. IGPS catalyzes the conversion of PRFAR and glutamine to IGP, AICAR and glutamate. The HisH subunit catalyzes the hydrolysis of glutamine to glutamate and ammonia as part of the synthesis of IGP and AICAR. The resulting ammonia molecule is channeled to the active site of HisF. This is Imidazole glycerol phosphate synthase subunit HisH from Xanthomonas oryzae pv. oryzae (strain MAFF 311018).